Here is a 161-residue protein sequence, read N- to C-terminus: Nucleotide-binding protein Tbd_1846 (161 aa).

This sequence belongs to the YajQ family.

In terms of biological role, nucleotide-binding protein. In Thiobacillus denitrificans (strain ATCC 25259 / T1), this protein is Nucleotide-binding protein Tbd_1846.